An 881-amino-acid polypeptide reads, in one-letter code: Alanine--tRNA ligase (881 aa).

4 residues coordinate Zn(2+): H566, H570, C668, and H672.

Belongs to the class-II aminoacyl-tRNA synthetase family. Requires Zn(2+) as cofactor.

The protein localises to the cytoplasm. The enzyme catalyses tRNA(Ala) + L-alanine + ATP = L-alanyl-tRNA(Ala) + AMP + diphosphate. Catalyzes the attachment of alanine to tRNA(Ala) in a two-step reaction: alanine is first activated by ATP to form Ala-AMP and then transferred to the acceptor end of tRNA(Ala). Also edits incorrectly charged Ser-tRNA(Ala) and Gly-tRNA(Ala) via its editing domain. This Frankia alni (strain DSM 45986 / CECT 9034 / ACN14a) protein is Alanine--tRNA ligase.